Consider the following 588-residue polypeptide: Acid beta-fructofuranosidase 1, vacuolar (588 aa).

Residues 1 to 31 (MDTSTSAYAPLPGEDPLFSGHPPASLRRSWK) are Cytoplasmic-facing. The propeptide at 1–115 (MDTSTSAYAP…LSYNWTNAMF (115 aa)) is removed in mature form. A helical; Signal-anchor for type II membrane protein transmembrane segment spans residues 32–52 (GFAVIFASVLFLLSLVGLIIH). At 53–588 (QGPQQPPDVM…LRALRKEVGR (536 aa)) the chain is on the lumenal side. The disordered stretch occupies residues 57–86 (QPPDVMPDKQDEHHHPQSTTPASETTASWE). Residues 62–71 (MPDKQDEHHH) are compositionally biased toward basic and acidic residues. Over residues 73-84 (QSTTPASETTAS) the composition is skewed to polar residues. Substrate is bound by residues 130-133 (WMND), Gln149, and Trp157. Asp133 is an active-site residue. Asn159 carries an N-linked (GlcNAc...) asparagine glycan. 192–193 (WS) lines the substrate pocket. N-linked (GlcNAc...) asparagine glycosylation is present at Asn226. Residues 256–257 (RD), Glu311, and Asp344 contribute to the substrate site. Cys499 and Cys545 are disulfide-bonded.

The protein belongs to the glycosyl hydrolase 32 family. In terms of assembly, monomer. May be present in two forms, a 70 kDa monomer and a heterodimer of the 30 kDa and 38 kDa subunits. The ratio of the levels of the two forms within cells appears to be regulated developmentally. Post-translationally, glycosylated. Expressed in buds, stems, roots and leaves. Expressed in the epidermal cells of young leaves and of primordial leaves.

The protein resides in the membrane. It is found in the vacuole lumen. It carries out the reaction Hydrolysis of terminal non-reducing beta-D-fructofuranoside residues in beta-D-fructofuranosides.. Functionally, acidic vacuolar invertase involved in light-induced bud burst. The protein is Acid beta-fructofuranosidase 1, vacuolar of Rosa hybrid cultivar.